We begin with the raw amino-acid sequence, 85 residues long: uncharacterized protein (85 aa).

This is an uncharacterized protein from Caenorhabditis elegans.